A 305-amino-acid polypeptide reads, in one-letter code: Peroxisome biogenesis factor 2 (305 aa).

Over 1-15 (MAAREESTQSANRVL) the chain is Peroxisomal matrix. The chain crosses the membrane as a helical span at residues 16 to 42 (RISQLDALELNKALEQLVWSQFTQCFH). The Cytoplasmic portion of the chain corresponds to 43 to 48 (GFKPGL). Residues 49–74 (LARFEPEVKAFLWLFLWRFTIYSKNA) traverse the membrane as a helical segment. The Peroxisomal matrix portion of the chain corresponds to 75 to 98 (TVGQSVLNIQHKNDSSPNPVYQPP). Residues 99 to 125 (SKNQKLLYAVCTIGGRWLEERCYDLFR) form a helical membrane-spanning segment. The Cytoplasmic segment spans residues 126-133 (NRHLASFG). Residues 134-160 (KAKQCMNFVVGLLKLGELMNFLIFLQK) traverse the membrane as a helical segment. Residues 161–187 (GKFATLTERLLGIHSVFCKPQNMREVG) are Peroxisomal matrix-facing. A helical membrane pass occupies residues 188–211 (FEYMNRELLWHGFAEFLIFLLPLI). Residues 212-305 (NIQKLKAKLS…GIQMSEVNAL (94 aa)) are Cytoplasmic-facing. The Zn(2+) site is built by Cys244, Cys247, Cys259, His261, Cys264, Cys267, Cys280, and Cys283. The RING-type zinc finger occupies 244-284 (CALCGEWPTMPHTIGCEHVFCYYCVKSSFLFDIYFTCPKCG).

Belongs to the pex2/pex10/pex12 family. As to quaternary structure, component of the PEX2-PEX10-PEX12 retrotranslocation channel, composed of PEX2, PEX10 and PEX12. Post-translationally, forms intramolecular and intermolecular disulfide bonds in response to reactive oxygen species (ROS), promoting higher stability.

It is found in the peroxisome membrane. The enzyme catalyses [E2 ubiquitin-conjugating enzyme]-S-ubiquitinyl-L-cysteine + [acceptor protein]-L-cysteine = [E2 ubiquitin-conjugating enzyme]-L-cysteine + [acceptor protein]-S-ubiquitinyl-L-cysteine.. It carries out the reaction S-ubiquitinyl-[E2 ubiquitin-conjugating enzyme]-L-cysteine + [acceptor protein]-L-lysine = [E2 ubiquitin-conjugating enzyme]-L-cysteine + N(6)-ubiquitinyl-[acceptor protein]-L-lysine.. It participates in protein modification; protein ubiquitination. Functionally, E3 ubiquitin-protein ligase component of a retrotranslocation channel required for peroxisome organization by mediating export of the PEX5 receptor from peroxisomes to the cytosol, thereby promoting PEX5 recycling. The retrotranslocation channel is composed of PEX2, PEX10 and PEX12; each subunit contributing transmembrane segments that coassemble into an open channel that specifically allows the passage of PEX5 through the peroxisomal membrane. PEX2 also regulates peroxisome organization by acting as a E3 ubiquitin-protein ligase. PEX2 ubiquitinates PEX5 during its passage through the retrotranslocation channel: catalyzes monoubiquitination of PEX5 at 'Cys-11', a modification that acts as a signal for PEX5 extraction into the cytosol. Required for pexophagy in response to starvation by mediating ubiquitination of peroxisomal proteins, such as PEX5 and ABCD3/PMP70. Also involved in the response to reactive oxygen species (ROS) by mediating 'Lys-48'-linked polyubiquitination and subsequent degradation of PNPLA2/ATGL, thereby regulating lipolysis. This chain is Peroxisome biogenesis factor 2, found in Mus musculus (Mouse).